Consider the following 464-residue polypeptide: Delta(5) fatty acid desaturase A (464 aa).

One can recognise a Cytochrome b5 heme-binding domain in the interval Gly-13–Ser-90. His-48 and His-71 together coordinate heme. The next 2 helical transmembrane spans lie at Ala-125 to Leu-145 and Phe-153 to His-173. Residues His-176–His-180 carry the Histidine box-1 motif. The Histidine box-2 motif lies at His-212 to His-217. Residues Phe-318–Ile-338 traverse the membrane as a helical segment. Positions Gln-396–His-400 match the Histidine box-3 motif.

This sequence belongs to the fatty acid desaturase type 1 family. Fe cation is required as a cofactor.

Its subcellular location is the membrane. Its function is as follows. Specific for desaturation of the 5 position in C16 and C18 fatty acids. The sequence is that of Delta(5) fatty acid desaturase A (fadA) from Dictyostelium discoideum (Social amoeba).